Reading from the N-terminus, the 445-residue chain is MSKNSSRDSSPEEVSPDTETPSTTTAPKTFRELGVIDSLCEACEELGYTAPTPIQERCIPIALEGRDLIGLAETGSGKTAAFVLPMLQALMDKPQQFHSLILAPTRELAQQIAHTVEALGARISVRCTLLIGGMDMISQAIALGKKPHVIVATPGRLLDHLENTKGFSLRTLKYLVLDEADRLLDLDFGPILDKLLRLLPKRKTYLFSATMSSKVESLQRASLSDPVRVSVSTKNQTASKLLQSYLFIPHKFKDFYLVYLLNERAGQMGIIFTRTVHETQRLSIMLRNLGFPAIPIHGQLSQSARLASLNKFRARSRNLLIATDVAARGLDIPAVDYVLNYDLPQDSKTYIHRVGRTARAGKSGIAFSFVTQYEVELWLRIEDALGKKVEEYKPEKDEVMIFAERVNDAQRVAALTMRDMQDKDNKGRGPRNRKRTRDDLDQDDG.

Basic and acidic residues predominate over residues 1–10; the sequence is MSKNSSRDSS. The interval 1 to 28 is disordered; sequence MSKNSSRDSSPEEVSPDTETPSTTTAPK. Positions 17-28 are enriched in low complexity; it reads DTETPSTTTAPK. Residues 28–56 carry the Q motif motif; the sequence is KTFRELGVIDSLCEACEELGYTAPTPIQE. The region spanning 59 to 229 is the Helicase ATP-binding domain; that stretch reads IPIALEGRDL…RASLSDPVRV (171 aa). Residue 72–79 participates in ATP binding; sequence AETGSGKT. The DEAD box motif lies at 178–181; sequence DEAD. Residues 240–400 form the Helicase C-terminal domain; sequence KLLQSYLFIP…EYKPEKDEVM (161 aa). The interval 415–445 is disordered; sequence LTMRDMQDKDNKGRGPRNRKRTRDDLDQDDG.

It belongs to the DEAD box helicase family. DDX47/RRP3 subfamily. As to quaternary structure, interacts with the SSU processome.

Its subcellular location is the nucleus. The enzyme catalyses ATP + H2O = ADP + phosphate + H(+). In terms of biological role, ATP-dependent rRNA helicase required for pre-ribosomal RNA processing. Involved in the maturation of the 35S-pre-rRNA and to its cleavage to mature 18S rRNA. The chain is ATP-dependent rRNA helicase rrp3 from Aspergillus terreus (strain NIH 2624 / FGSC A1156).